A 552-amino-acid chain; its full sequence is Alpha-galactosidase (552 aa).

Residues W65, Y191, 220–221 (DD), 325–327 (KID), C368, and R383 contribute to the substrate site. D327 acts as the Nucleophile in catalysis. D387 functions as the Proton donor/acceptor in the catalytic mechanism.

This sequence belongs to the glycosyl hydrolase 36 family. Homodimer.

The catalysed reaction is Hydrolysis of terminal, non-reducing alpha-D-galactose residues in alpha-D-galactosides, including galactose oligosaccharides, galactomannans and galactolipids.. With respect to regulation, inhibited by hydrolysis product alpha-galactopyranose and to a lesser extent by beta-galactopyranose, its mutarotational product. Inhibited by synthetic cyclopropyl carbasugars. In terms of biological role, hydrolyzes the short-chain alpha-galactosaccharides raffinose, melibiose and stachyose. The chain is Alpha-galactosidase from Thermotoga maritima (strain ATCC 43589 / DSM 3109 / JCM 10099 / NBRC 100826 / MSB8).